The following is a 227-amino-acid chain: (S)-2-haloacid dehalogenase (227 aa).

Residue Asp10 is the Nucleophile of the active site. Residues 11 to 12 (LY), Arg41, and 118 to 119 (SN) contribute to the an (S)-2-haloacid site. The interval 175–180 (SSNAWD) is important for catalytic activity.

This sequence belongs to the HAD-like hydrolase superfamily. S-2-haloalkanoic acid dehalogenase family.

It carries out the reaction an (S)-2-haloacid + H2O = a (2R)-2-hydroxycarboxylate + a halide anion + H(+). The enzyme catalyses (S)-2-chloropropanoate + H2O = (R)-lactate + chloride + H(+). Catalyzes the hydrolytic dehalogenation of small (S)-2-haloalkanoic acids to yield the corresponding (R)-2-hydroxyalkanoic acids. Acts on acids of short chain lengths, C(2) to C(4), with inversion of configuration at C-2. Active with 2-halogenated carboxylic acids and converts only the S-isomer (or L-isomer) of 2-chloropropionic acid with inversion of configuration to produce R-lactate (or D-isomer). This Pseudomonas fluorescens protein is (S)-2-haloacid dehalogenase (dhl VII).